The sequence spans 339 residues: Phosphate acyltransferase (339 aa).

This sequence belongs to the PlsX family. Homodimer. Probably interacts with PlsY.

The protein localises to the cytoplasm. The catalysed reaction is a fatty acyl-[ACP] + phosphate = an acyl phosphate + holo-[ACP]. It participates in lipid metabolism; phospholipid metabolism. In terms of biological role, catalyzes the reversible formation of acyl-phosphate (acyl-PO(4)) from acyl-[acyl-carrier-protein] (acyl-ACP). This enzyme utilizes acyl-ACP as fatty acyl donor, but not acyl-CoA. The chain is Phosphate acyltransferase from Methylococcus capsulatus (strain ATCC 33009 / NCIMB 11132 / Bath).